The primary structure comprises 98 residues: Large ribosomal subunit protein bL21 (98 aa).

It belongs to the bacterial ribosomal protein bL21 family. As to quaternary structure, part of the 50S ribosomal subunit. Contacts protein L20.

This protein binds to 23S rRNA in the presence of protein L20. The chain is Large ribosomal subunit protein bL21 from Chloroherpeton thalassium (strain ATCC 35110 / GB-78).